A 551-amino-acid chain; its full sequence is MEGVGLRAVGSHCSLSEMDDLDLTRALDKPRLKIERKRSFDERSMSELSTGYSRHDGIHDSPRGRSVLDTPLSSARNSFEPHPMMAEAWEALRRSMVFFRGQPVGTLAAVDNTTDEVLNYDQVFVRDFVPSALAFLMNGEPDIVKHFLLKTLQLQGWEKRVDRFKLGEGVMPASFKVLHDPIRETDNIVADFGESAIGRVAPVDSGFWWIILLRAYTKSTGDLTLSETPECQKGMKLILSLCLAEGFDTFPTLLCADGCSMIDRRMGVYGYPIEIQALFFMALRSALSMLKPDGDGREVIERIVKRLHALSFHMRNYFWLDHQNLNDIYRFKTEEYSHTAVNKFNVMPDSIPEWVFDFMPLRGGYFVGNVGPAHMDFRWFALGNCVSILSSLATPDQSMAIMDLLEHRWAELVGEMPLKICYPCLEGHEWRIVTGCDPKNTRWSYHNGGSWPVLLWQLTAACIKTGRPQIARRAVDLIESRLHRDCWPEYYDGKLGRYVGKQARKYQTWSIAGYLVAKMLLEDPSHIGMISLEEDKLMKPVIKRSASWPQL.

An N-acetylmethionine modification is found at M1. Residues S11, S14, S44, and S61 each carry the phosphoserine modification. Residues 50–74 (TGYSRHDGIHDSPRGRSVLDTPLSS) are disordered. A compositionally biased stretch (basic and acidic residues) spans 53 to 63 (SRHDGIHDSPR). T70 is modified (phosphothreonine). S547 carries the post-translational modification Phosphoserine.

The protein belongs to the glycosyl hydrolase 100 family. In terms of assembly, forms homohexamers. Interacts with PIP5K9. Interaction with PIP5K9 represses CINV1 activity. Interacts with GRF1, GRF2, GRF3, GRF4, GRF5, GRF6, GRF7, GRF8 and GRF10; these interactions are dependent of the phosphorylation at Ser-547. In terms of processing, phosphorylated at Ser-547 by CPK3 and CPK21. As to expression, expressed in radicle, hypocotyls, root tips and vascular cylinder, leaf vasculature, shoot stipules, trichomes, stem, stigma apex and base of siliques.

Its subcellular location is the cytoplasm. It localises to the cytosol. The protein resides in the nucleus. It catalyses the reaction Hydrolysis of terminal non-reducing beta-D-fructofuranoside residues in beta-D-fructofuranosides.. Cytosolic invertase that specifically cleaves sucrose into glucose and fructose and is involved in the regulation of multiple tissue development including primary root elongation, root hair growth, leaf and silique development, and floral transition. Is involved in osmotic stress-induced inhibition on lateral root growth by controlling the concentration of hexose in cells. May regulate sugar-mediated root development by controlling sucrose catabolism in root cells. Contributes to carbon partitioning and cellulose biosynthesis in seedlings. The sequence is that of Alkaline/neutral invertase CINV1 from Arabidopsis thaliana (Mouse-ear cress).